Consider the following 569-residue polypeptide: Melanophilin (569 aa).

The RabBD domain maps to 4 to 124; it reads KLDLSKLTDD…MGSLEWYYGH (121 aa). Residues 58–112 form an FYVE-type zinc finger; sequence HLNETHCARCLQPYRLLVAPKRQCLDCHLFTCQDCSHAHPEEEGWLCDPCHLARV. The interval 143–430 is disordered; that stretch reads GRLQGGGGPE…MQPGRTTDQE (288 aa). 2 stretches are compositionally biased toward basic and acidic residues: residues 352 to 362 and 379 to 390; these read ETLKRKLEEMT and EEEAGLNRKTSI. A compositionally biased stretch (polar residues) spans 404 to 415; the sequence is SGQTSRQETSPR. Residues 431 to 465 adopt a coiled-coil conformation; the sequence is LLELEDRVAVTASEVQQVESEVSNIKSKIAALQAA. Residues 490–569 form a disordered region; that stretch reads GRLGQTPKDP…FAKPVMTQRP (80 aa). The segment covering 526-535 has biased composition (basic and acidic residues); that stretch reads SQDKAGDSFD.

In terms of assembly, binds RAB27A that has been activated by GTP-binding via its N-terminus. Binds MYO5A via its C-terminal coiled coil domain.

The protein localises to the melanosome. Functionally, rab effector protein involved in melanosome transport. Serves as link between melanosome-bound RAB27A and the motor protein MYO5A. This Felis catus (Cat) protein is Melanophilin (MLPH).